We begin with the raw amino-acid sequence, 475 residues long: Probable proline--tRNA ligase, mitochondrial (475 aa).

The N-terminal 29 residues, 1–29 (MEGLLTRCRTLSALATCSLRHSRCIVRKC), are a transit peptide targeting the mitochondrion.

This sequence belongs to the class-II aminoacyl-tRNA synthetase family.

The protein resides in the mitochondrion matrix. The enzyme catalyses tRNA(Pro) + L-proline + ATP = L-prolyl-tRNA(Pro) + AMP + diphosphate. In terms of biological role, mitochondrial aminoacyl-tRNA synthetase that catalyzes the specific attachment of the proline amino acid (aa) to the homologous transfer RNA (tRNA), further participating in protein synthesis. The reaction occurs in a two steps: proline is first activated by ATP to form Pro-AMP and then transferred to the acceptor end of tRNA(Pro). The protein is Probable proline--tRNA ligase, mitochondrial (Pars2) of Rattus norvegicus (Rat).